Here is a 135-residue protein sequence, read N- to C-terminus: Small ribosomal subunit protein bS6 (135 aa).

The disordered stretch occupies residues 104–135; the sequence is FSRLDRNGHIGHDEKHPRSPSRQREDVIEGVE.

Belongs to the bacterial ribosomal protein bS6 family.

In terms of biological role, binds together with bS18 to 16S ribosomal RNA. The chain is Small ribosomal subunit protein bS6 from Bartonella henselae (strain ATCC 49882 / DSM 28221 / CCUG 30454 / Houston 1) (Rochalimaea henselae).